We begin with the raw amino-acid sequence, 184 residues long: Photosystem I assembly protein Ycf4 (184 aa).

Helical transmembrane passes span 22–42 (FCWA…GTSS) and 57–77 (ILFF…LFIS).

It belongs to the Ycf4 family.

It localises to the plastid. Its subcellular location is the chloroplast thylakoid membrane. In terms of biological role, seems to be required for the assembly of the photosystem I complex. This chain is Photosystem I assembly protein Ycf4, found in Liriodendron tulipifera (Tuliptree).